The chain runs to 362 residues: 3-isopropylmalate dehydrogenase (362 aa).

78-91 (GPKWEHLAPNDQPE) lines the NAD(+) pocket. Substrate-binding residues include Arg-99, Arg-109, Arg-138, and Asp-227. Mg(2+)-binding residues include Asp-227, Asp-251, and Asp-255. 285 to 297 (GSAPDIAGKNIAN) provides a ligand contact to NAD(+).

It belongs to the isocitrate and isopropylmalate dehydrogenases family. LeuB type 1 subfamily. Homodimer. The cofactor is Mg(2+). Mn(2+) serves as cofactor.

It is found in the cytoplasm. It carries out the reaction (2R,3S)-3-isopropylmalate + NAD(+) = 4-methyl-2-oxopentanoate + CO2 + NADH. The protein operates within amino-acid biosynthesis; L-leucine biosynthesis; L-leucine from 3-methyl-2-oxobutanoate: step 3/4. Functionally, catalyzes the oxidation of 3-carboxy-2-hydroxy-4-methylpentanoate (3-isopropylmalate) to 3-carboxy-4-methyl-2-oxopentanoate. The product decarboxylates to 4-methyl-2 oxopentanoate. The polypeptide is 3-isopropylmalate dehydrogenase (Photobacterium profundum (strain SS9)).